Consider the following 136-residue polypeptide: Membrane-bound negative regulator YvrL (136 aa).

The next 4 membrane-spanning stretches (helical) occupy residues 18–38, 46–66, 83–103, and 106–126; these read LLAA…LFSL, AAHV…FEPF, LFIL…AHTT, and LISD…VFLI.

The protein localises to the cell membrane. In terms of biological role, negatively regulates RNA polymerase sigma factor SigO-dependent transcription. Prevents the expression or secretion of OxdC under nonstress conditions. May act as an anti-sigma factor. This is Membrane-bound negative regulator YvrL (yvrL) from Bacillus subtilis (strain 168).